The sequence spans 397 residues: Elongation factor Tu (397 aa).

Residues 10–206 (KPHVNIGTIG…AIDSYIPTPE (197 aa)) enclose the tr-type G domain. The G1 stretch occupies residues 19–26 (GHVDHGKT). Position 19 to 26 (19 to 26 (GHVDHGKT)) interacts with GTP. Mg(2+) is bound at residue T26. The tract at residues 60–64 (GITIN) is G2. The tract at residues 81 to 84 (DCPG) is G3. GTP contacts are provided by residues 81 to 85 (DCPGH) and 136 to 139 (NKAD). Residues 136-139 (NKAD) are G4. The interval 174-176 (SAL) is G5.

The protein belongs to the TRAFAC class translation factor GTPase superfamily. Classic translation factor GTPase family. EF-Tu/EF-1A subfamily. As to quaternary structure, monomer.

It is found in the cytoplasm. It carries out the reaction GTP + H2O = GDP + phosphate + H(+). In terms of biological role, GTP hydrolase that promotes the GTP-dependent binding of aminoacyl-tRNA to the A-site of ribosomes during protein biosynthesis. This Clostridium botulinum (strain Loch Maree / Type A3) protein is Elongation factor Tu.